The primary structure comprises 152 residues: Transcriptional regulator MraZ (152 aa).

2 SpoVT-AbrB domains span residues 5–52 and 81–124; these read ASAV…PLNQ and ATEC…SESE.

It belongs to the MraZ family. As to quaternary structure, forms oligomers.

It localises to the cytoplasm. Its subcellular location is the nucleoid. This chain is Transcriptional regulator MraZ, found in Histophilus somni (strain 2336) (Haemophilus somnus).